Reading from the N-terminus, the 232-residue chain is Ribosome maturation protein SDO1 homolog (232 aa).

Belongs to the SDO1/SBDS family.

In Methanothermobacter thermautotrophicus (strain ATCC 29096 / DSM 1053 / JCM 10044 / NBRC 100330 / Delta H) (Methanobacterium thermoautotrophicum), this protein is Ribosome maturation protein SDO1 homolog.